Reading from the N-terminus, the 365-residue chain is Putative glycosyltransferase C06E1.7 (365 aa).

The protein belongs to the glycosyltransferase 11 family.

The sequence is that of Putative glycosyltransferase C06E1.7 from Caenorhabditis elegans.